A 71-amino-acid chain; its full sequence is UPF0434 protein Meso_3270 (71 aa).

The protein belongs to the UPF0434 family.

This Chelativorans sp. (strain BNC1) protein is UPF0434 protein Meso_3270.